Reading from the N-terminus, the 145-residue chain is Large ribosomal subunit protein uL16 (145 aa).

Over residues 1–21 the composition is skewed to basic residues; sequence MLVPTRVKHRKQHRGRMHGKA. Residues 1–22 form a disordered region; that stretch reads MLVPTRVKHRKQHRGRMHGKAT.

Belongs to the universal ribosomal protein uL16 family. In terms of assembly, part of the 50S ribosomal subunit.

Functionally, binds 23S rRNA and is also seen to make contacts with the A and possibly P site tRNAs. This is Large ribosomal subunit protein uL16 from Desulfitobacterium hafniense (strain Y51).